The chain runs to 379 residues: Wnt inhibitory factor 1 (379 aa).

The signal sequence occupies residues 1–28; sequence MARRSAFPAAALWLWSILLCLLALRAEA. The region spanning 38–177 is the WIF domain; it reads LWIDAHQARV…PQNAIFFKTC (140 aa). Asn-88 carries N-linked (GlcNAc...) asparagine glycosylation. 7 disulfide bridges follow: Cys-140/Cys-177, Cys-182/Cys-192, Cys-186/Cys-198, Cys-200/Cys-209, Cys-214/Cys-224, Cys-218/Cys-230, and Cys-232/Cys-241. 5 consecutive EGF-like domains span residues 178–210, 211–242, 243–271, 274–306, and 307–338; these read QQAE…PHCE, KALC…VNCD, KANC…LEGE, EISK…DLCS, and KPVC…RHCN. Residue Asn-245 is glycosylated (N-linked (GlcNAc...) asparagine). 8 disulfide bridges follow: Cys-246-Cys-256, Cys-250-Cys-262, Cys-278-Cys-288, Cys-282-Cys-294, Cys-296-Cys-305, Cys-310-Cys-320, Cys-314-Cys-326, and Cys-328-Cys-337. The segment at 354–379 is disordered; sequence AQLRQHTPSLKKAEERRDPPESNYIW. Over residues 364-373 the composition is skewed to basic and acidic residues; that stretch reads KKAEERRDPP.

As to quaternary structure, interacts with MYOC.

Its subcellular location is the secreted. Binds to WNT proteins and inhibits their activities. May be involved in mesoderm segmentation. This chain is Wnt inhibitory factor 1 (WIF1), found in Homo sapiens (Human).